We begin with the raw amino-acid sequence, 579 residues long: A-type ATP synthase subunit A (579 aa).

Residue 229 to 236 (GPFGSGKT) participates in ATP binding.

It belongs to the ATPase alpha/beta chains family. In terms of assembly, has multiple subunits with at least A(3), B(3), C, D, E, F, H, I and proteolipid K(x).

It is found in the cell membrane. It catalyses the reaction ATP + H2O + 4 H(+)(in) = ADP + phosphate + 5 H(+)(out). Functionally, component of the A-type ATP synthase that produces ATP from ADP in the presence of a proton gradient across the membrane. The A chain is the catalytic subunit. This Methanocella arvoryzae (strain DSM 22066 / NBRC 105507 / MRE50) protein is A-type ATP synthase subunit A.